Here is a 378-residue protein sequence, read N- to C-terminus: Lipid-A-disaccharide synthase (378 aa).

It belongs to the LpxB family.

The catalysed reaction is a lipid X + a UDP-2-N,3-O-bis[(3R)-3-hydroxyacyl]-alpha-D-glucosamine = a lipid A disaccharide + UDP + H(+). It functions in the pathway bacterial outer membrane biogenesis; LPS lipid A biosynthesis. Functionally, condensation of UDP-2,3-diacylglucosamine and 2,3-diacylglucosamine-1-phosphate to form lipid A disaccharide, a precursor of lipid A, a phosphorylated glycolipid that anchors the lipopolysaccharide to the outer membrane of the cell. The polypeptide is Lipid-A-disaccharide synthase (Methylobacillus flagellatus (strain ATCC 51484 / DSM 6875 / VKM B-1610 / KT)).